The chain runs to 256 residues: Imidazole glycerol phosphate synthase subunit HisF (256 aa).

Catalysis depends on residues aspartate 11 and aspartate 130.

The protein belongs to the HisA/HisF family. In terms of assembly, heterodimer of HisH and HisF.

It is found in the cytoplasm. It catalyses the reaction 5-[(5-phospho-1-deoxy-D-ribulos-1-ylimino)methylamino]-1-(5-phospho-beta-D-ribosyl)imidazole-4-carboxamide + L-glutamine = D-erythro-1-(imidazol-4-yl)glycerol 3-phosphate + 5-amino-1-(5-phospho-beta-D-ribosyl)imidazole-4-carboxamide + L-glutamate + H(+). It participates in amino-acid biosynthesis; L-histidine biosynthesis; L-histidine from 5-phospho-alpha-D-ribose 1-diphosphate: step 5/9. Functionally, IGPS catalyzes the conversion of PRFAR and glutamine to IGP, AICAR and glutamate. The HisF subunit catalyzes the cyclization activity that produces IGP and AICAR from PRFAR using the ammonia provided by the HisH subunit. The polypeptide is Imidazole glycerol phosphate synthase subunit HisF (Synechococcus sp. (strain CC9605)).